Reading from the N-terminus, the 131-residue chain is Profilin-4 (131 aa).

It belongs to the profilin family. Occurs in many kinds of cells as a complex with monomeric actin in a 1:1 ratio.

It localises to the cytoplasm. The protein localises to the cytoskeleton. Functionally, binds to actin and affects the structure of the cytoskeleton. At high concentrations, profilin prevents the polymerization of actin, whereas it enhances it at low concentrations. By binding to PIP2, it inhibits the formation of IP3 and DG. In Hevea brasiliensis (Para rubber tree), this protein is Profilin-4.